Here is a 346-residue protein sequence, read N- to C-terminus: Putative transmembrane protein ORF346 (346 aa).

6 helical membrane-spanning segments follow: residues 67–87, 104–124, 134–154, 156–176, 181–201, and 219–241; these read LPII…CIVY, IINP…VGLT, PPYL…SGIY, AIGD…GLFI, IILY…LCLS, and YPFS…LGSY. The tract at residues 294-346 is disordered; sequence SEYPHSENGSGGSGGSGSGSGSGGSGSGGNSGSGGSGSGSSGSGGNSGSGNNG. A compositionally biased stretch (gly residues) spans 302–346; sequence GSGGSGGSGSGSGSGGSGSGGNSGSGGSGSGSSGSGGNSGSGNNG.

It is found in the host membrane. The chain is Putative transmembrane protein ORF346 from Acidianus bottle-shaped virus (isolate Italy/Pozzuoli) (ABV).